The primary structure comprises 360 residues: Phospho-N-acetylmuramoyl-pentapeptide-transferase (360 aa).

Transmembrane regions (helical) follow at residues 27–47 (IVSL…LIAW), 72–92 (PTMG…MWAY), 94–114 (SNPY…VGFI), 132–152 (WKYF…YSIG), 168–188 (IMPQ…VGTS), 199–219 (GLAI…AWAT), 236–256 (AGEL…FLWF), 263–283 (VFMG…IAVL), 288–308 (FLLV…ILQV), and 338–358 (VIVR…ATLK).

It belongs to the glycosyltransferase 4 family. MraY subfamily. The cofactor is Mg(2+).

It localises to the cell inner membrane. It catalyses the reaction UDP-N-acetyl-alpha-D-muramoyl-L-alanyl-gamma-D-glutamyl-meso-2,6-diaminopimeloyl-D-alanyl-D-alanine + di-trans,octa-cis-undecaprenyl phosphate = di-trans,octa-cis-undecaprenyl diphospho-N-acetyl-alpha-D-muramoyl-L-alanyl-D-glutamyl-meso-2,6-diaminopimeloyl-D-alanyl-D-alanine + UMP. The protein operates within cell wall biogenesis; peptidoglycan biosynthesis. In terms of biological role, catalyzes the initial step of the lipid cycle reactions in the biosynthesis of the cell wall peptidoglycan: transfers peptidoglycan precursor phospho-MurNAc-pentapeptide from UDP-MurNAc-pentapeptide onto the lipid carrier undecaprenyl phosphate, yielding undecaprenyl-pyrophosphoryl-MurNAc-pentapeptide, known as lipid I. The sequence is that of Phospho-N-acetylmuramoyl-pentapeptide-transferase from Yersinia pestis bv. Antiqua (strain Angola).